The primary structure comprises 250 residues: Nuclear transcription factor Y subunit C-4 (250 aa).

Low complexity predominate over residues 1 to 10 (MDNNNNNNNQ). 2 disordered regions span residues 1-35 (MDNN…PSGS) and 209-250 (GVYA…DSQG). The span at 214-225 (PPSQAWQSVWQN) shows a compositional bias: polar residues. Positions 227–242 (AGGGDDVSYGSGGSSG) are enriched in gly residues.

This sequence belongs to the NFYC/HAP5 subunit family. Heterotrimeric transcription factor composed of three components, NF-YA, NF-YB and NF-YC. NF-YB and NF-YC must interact and dimerize for NF-YA association and DNA binding. As to expression, ubiquitous. Present in etiolated seedlings.

Its subcellular location is the nucleus. Its function is as follows. Stimulates the transcription of various genes by recognizing and binding to a CCAAT motif in promoters. Involved in the abscisic acid (ABA) signaling pathway. The chain is Nuclear transcription factor Y subunit C-4 (NFYC4) from Arabidopsis thaliana (Mouse-ear cress).